Consider the following 841-residue polypeptide: Probable alpha-glucuronidase A (841 aa).

An N-terminal signal peptide occupies residues 1-20 (MRGLNLFQLILALLLSMVAA). N-linked (GlcNAc...) asparagine glycans are attached at residues Asn-51, Asn-76, Asn-85, Asn-149, Asn-222, Asn-279, Asn-310, Asn-343, Asn-450, Asn-465, Asn-527, Asn-576, Asn-682, Asn-723, and Asn-732.

It belongs to the glycosyl hydrolase 67 family.

Its subcellular location is the secreted. It catalyses the reaction an alpha-D-glucuronoside + H2O = D-glucuronate + an alcohol. Functionally, alpha-glucuronidase involved in the hydrolysis of xylan, a major structural heterogeneous polysaccharide found in plant biomass representing the second most abundant polysaccharide in the biosphere, after cellulose. Releases 4-O-methylglucuronic acid from xylan. This is Probable alpha-glucuronidase A (aguA) from Aspergillus niger (strain ATCC MYA-4892 / CBS 513.88 / FGSC A1513).